Here is a 1161-residue protein sequence, read N- to C-terminus: Nuclear pore complex-interacting protein family member B11 (1161 aa).

A helical membrane pass occupies residues 63 to 87 (IIIAFPTSYKVVITLWIVYLWVSLL). Disordered regions lie at residues 278–580 (ADDN…DDNI) and 892–1161 (SADD…RRLS). Residues 311–321 (PLPPSAPPSAP) show a composition bias toward pro residues. 9 stretches are compositionally biased toward basic and acidic residues: residues 368 to 378 (DNIKTTAERLR), 410 to 420 (DNIKTPAEHLR), 452 to 462 (DNIKTPAERLR), 494 to 504 (DNIKTPAEHLR), 536 to 546 (DNIKTTAEHLR), 918 to 928 (DNIKTPAERLR), 960 to 970 (DNIKTPAERLR), 1002 to 1012 (DNIKTPAERLR), and 1044 to 1054 (DNIKTPAERLR).

The protein belongs to the NPIP family.

The protein resides in the membrane. The protein is Nuclear pore complex-interacting protein family member B11 (NPIPB11) of Homo sapiens (Human).